The following is a 783-amino-acid chain: E3 UFM1-protein ligase 1 homolog (783 aa).

The disordered stretch occupies residues 404 to 482; the sequence is SNSSANFDAD…AGSSRKSVKP (79 aa). The span at 445-457 shows a compositional bias: basic residues; it reads KSTKKHQRGRAAA.

This sequence belongs to the UFL1 family.

E3 UFM1-protein ligase that mediates ufmylation of target proteins. The sequence is that of E3 UFM1-protein ligase 1 homolog from Drosophila mojavensis (Fruit fly).